The primary structure comprises 139 residues: Nucleoside diphosphate kinase (139 aa).

Residues lysine 10, phenylalanine 58, arginine 86, threonine 92, arginine 103, and asparagine 113 each coordinate ATP. Histidine 116 (pros-phosphohistidine intermediate) is an active-site residue.

Belongs to the NDK family. As to quaternary structure, homotetramer. It depends on Mg(2+) as a cofactor.

The protein localises to the cytoplasm. It carries out the reaction a 2'-deoxyribonucleoside 5'-diphosphate + ATP = a 2'-deoxyribonucleoside 5'-triphosphate + ADP. The catalysed reaction is a ribonucleoside 5'-diphosphate + ATP = a ribonucleoside 5'-triphosphate + ADP. Major role in the synthesis of nucleoside triphosphates other than ATP. The ATP gamma phosphate is transferred to the NDP beta phosphate via a ping-pong mechanism, using a phosphorylated active-site intermediate. This chain is Nucleoside diphosphate kinase, found in Phenylobacterium zucineum (strain HLK1).